The primary structure comprises 230 residues: Orotidine 5'-phosphate decarboxylase (230 aa).

Residues aspartate 10, lysine 31, 58–67, threonine 117, arginine 179, glutamine 188, glycine 208, and arginine 209 contribute to the substrate site; that span reads DLKLHDIPNT. The active-site Proton donor is lysine 60.

The protein belongs to the OMP decarboxylase family. Type 1 subfamily. Homodimer.

It carries out the reaction orotidine 5'-phosphate + H(+) = UMP + CO2. The protein operates within pyrimidine metabolism; UMP biosynthesis via de novo pathway; UMP from orotate: step 2/2. Catalyzes the decarboxylation of orotidine 5'-monophosphate (OMP) to uridine 5'-monophosphate (UMP). This is Orotidine 5'-phosphate decarboxylase from Staphylococcus haemolyticus (strain JCSC1435).